A 264-amino-acid chain; its full sequence is S-adenosylmethionine decarboxylase proenzyme (264 aa).

Catalysis depends on serine 112, which acts as the Schiff-base intermediate with substrate; via pyruvic acid. Pyruvic acid (Ser); by autocatalysis is present on serine 112. Histidine 117 serves as the catalytic Proton acceptor; for processing activity. Cysteine 140 serves as the catalytic Proton donor; for catalytic activity.

This sequence belongs to the prokaryotic AdoMetDC family. Type 2 subfamily. As to quaternary structure, heterooctamer of four alpha and four beta chains arranged as a tetramer of alpha/beta heterodimers. Requires pyruvate as cofactor. In terms of processing, is synthesized initially as an inactive proenzyme. Formation of the active enzyme involves a self-maturation process in which the active site pyruvoyl group is generated from an internal serine residue via an autocatalytic post-translational modification. Two non-identical subunits are generated from the proenzyme in this reaction, and the pyruvate is formed at the N-terminus of the alpha chain, which is derived from the carboxyl end of the proenzyme. The post-translation cleavage follows an unusual pathway, termed non-hydrolytic serinolysis, in which the side chain hydroxyl group of the serine supplies its oxygen atom to form the C-terminus of the beta chain, while the remainder of the serine residue undergoes an oxidative deamination to produce ammonia and the pyruvoyl group blocking the N-terminus of the alpha chain.

The enzyme catalyses S-adenosyl-L-methionine + H(+) = S-adenosyl 3-(methylsulfanyl)propylamine + CO2. Its pathway is amine and polyamine biosynthesis; S-adenosylmethioninamine biosynthesis; S-adenosylmethioninamine from S-adenosyl-L-methionine: step 1/1. Functionally, catalyzes the decarboxylation of S-adenosylmethionine to S-adenosylmethioninamine (dcAdoMet), the propylamine donor required for the synthesis of the polyamines spermine and spermidine from the diamine putrescine. This chain is S-adenosylmethionine decarboxylase proenzyme, found in Shigella dysenteriae serotype 1 (strain Sd197).